A 957-amino-acid chain; its full sequence is Atromentin synthetase (957 aa).

An adenylation (A) domain region spans residues serine 59 to valine 464. The 79-residue stretch at threonine 596 to valine 674 folds into the Carrier domain. The thiolation and peptide carrier (T) domain stretch occupies residues aspartate 601–asparagine 671. The residue at position 633 (serine 633) is an O-(pantetheine 4'-phosphoryl)serine. A thioesterase (TE) domain region spans residues proline 697 to isoleucine 947.

Belongs to the ATP-dependent AMP-binding enzyme family.

It participates in secondary metabolite biosynthesis. Functionally, the L-tyrosine:2-oxoglutarate aminotransferase atrD and the atromentin synthetase atrA catalyze consecutive steps to turn over L-tyrosine into atromentin, which represents the generic precursor molecule for the entire terphenylquinone and pulvinic acid family of pigments, which are widely distributed secondary metabolites in homobasidiomycetes. The first step is catalyzed by atrD which converts L-tyrosine in to 4-hydroxyphenylpyruvate (4-HPP). Adenylation of two 4-HPP monomers by the atrA adenylation (A) domain, ester bond formation between monomers and atrA, and symmetric C-C-bond formation between two monomers by atrA leads to atromentin. The chain is Atromentin synthetase from Tapinella panuoides (Oyster rollrim mushroom).